The sequence spans 142 residues: Neuritin (142 aa).

An N-terminal signal peptide occupies residues 1 to 27 (MGLKLNGRYISLILAVQIAYLVQAVRA). Gly116 carries the GPI-anchor amidated glycine lipid modification. Positions 117-142 (AAGSLLPAFPVLLVSLSAALATWLSF) are cleaved as a propeptide — removed in mature form.

This sequence belongs to the neuritin family. In terms of assembly, component of the outer core of AMPAR complex. AMPAR complex consists of an inner core made of 4 pore-forming GluA/GRIA proteins (GRIA1, GRIA2, GRIA3 and GRIA4) and 4 major auxiliary subunits arranged in a twofold symmetry. One of the two pairs of distinct binding sites is occupied either by CNIH2, CNIH3 or CACNG2, CACNG3. The other harbors CACNG2, CACNG3, CACNG4, CACNG8 or GSG1L. This inner core of AMPAR complex is complemented by outer core constituents binding directly to the GluA/GRIA proteins at sites distinct from the interaction sites of the inner core constituents. Outer core constituents include at least PRRT1, PRRT2, CKAMP44/SHISA9, FRRS1L and NRN1. The proteins of the inner and outer core serve as a platform for other, more peripherally associated AMPAR constituents. Alone or in combination, these auxiliary subunits control the gating and pharmacology of the AMPAR complex and profoundly impact their biogenesis and protein processing.

The protein resides in the cell membrane. It localises to the synapse. Promotes neurite outgrowth and especially branching of neuritic processes in primary hippocampal and cortical cells. The sequence is that of Neuritin (NRN1) from Homo sapiens (Human).